A 299-amino-acid chain; its full sequence is MLFDQIARNKRKTWLLLLVFFLLLGLVGYGVGYLWLGSGFGGLILALVIGFIYAVTMIFQSTNVVMAMNGAREVDEQTAPNLYHVVEDMAMVAQIPMPRVFIVDDPSMNAFATGSSPKNAAVAATTGLLAVMNREELEGVIGHEVSHIRNYDIRISTIAVALASAITMLAVMARNMMFWGGGRRRNDDDRNGSSGLEIILLIISLIAIILAPLAATLVQLAISRQREFLADASSVELTRNPQGMINALLKLDNSAPMQHHVDDASAALFINDPKKESGLQKFFYTHPPISERVERLKQM.

Transmembrane regions (helical) follow at residues 14–34 and 39–59; these read WLLL…VGYL and GFGG…TMIF. His-143 contributes to the Zn(2+) binding site. Glu-144 is a catalytic residue. A Zn(2+)-binding site is contributed by His-147. 2 helical membrane-spanning segments follow: residues 153–173 and 198–218; these read IRIS…AVMA and IILL…ATLV. Position 227 (Glu-227) interacts with Zn(2+).

Belongs to the peptidase M48B family. Zn(2+) serves as cofactor.

It localises to the cell membrane. The sequence is that of Protease HtpX homolog from Streptococcus thermophilus (strain ATCC BAA-491 / LMD-9).